The primary structure comprises 181 residues: NADH-quinone oxidoreductase subunit I (181 aa).

4Fe-4S ferredoxin-type domains are found at residues 52–81 (TRDSAGHERCVACNLCAVSCPVGCISLKKS) and 91–120 (EFFRINFSRCIFCGMCEEACPTAAIQLISD). [4Fe-4S] cluster is bound by residues Cys-61, Cys-64, Cys-67, Cys-71, Cys-100, Cys-103, Cys-106, and Cys-110.

This sequence belongs to the complex I 23 kDa subunit family. In terms of assembly, NDH-1 is composed of 13 different subunits. Subunits NuoA, H, J, K, L, M, N constitute the membrane sector of the complex. [4Fe-4S] cluster is required as a cofactor.

The protein localises to the cell inner membrane. The enzyme catalyses a quinone + NADH + 5 H(+)(in) = a quinol + NAD(+) + 4 H(+)(out). NDH-1 shuttles electrons from NADH, via FMN and iron-sulfur (Fe-S) centers, to quinones in the respiratory chain. The immediate electron acceptor for the enzyme in this species is believed to be ubiquinone. Couples the redox reaction to proton translocation (for every two electrons transferred, four hydrogen ions are translocated across the cytoplasmic membrane), and thus conserves the redox energy in a proton gradient. This chain is NADH-quinone oxidoreductase subunit I, found in Blochmanniella floridana.